Reading from the N-terminus, the 506-residue chain is Ribose import ATP-binding protein RbsA (506 aa).

2 consecutive ABC transporter domains span residues 5 to 241 (LALT…VGRR) and 254 to 498 (RDAA…TSDV). Position 37–44 (37–44 (GENGAGKS)) interacts with ATP.

Belongs to the ABC transporter superfamily. Ribose importer (TC 3.A.1.2.1) family. As to quaternary structure, the complex is composed of an ATP-binding protein (RbsA), two transmembrane proteins (RbsC) and a solute-binding protein (RbsB).

It localises to the cell inner membrane. The enzyme catalyses D-ribose(out) + ATP + H2O = D-ribose(in) + ADP + phosphate + H(+). Its function is as follows. Part of the ABC transporter complex RbsABC involved in ribose import. Responsible for energy coupling to the transport system. In Burkholderia mallei (strain ATCC 23344), this protein is Ribose import ATP-binding protein RbsA.